The sequence spans 484 residues: Protein nucleotidyltransferase YdiU (484 aa).

Positions 81, 83, 84, 103, 115, 116, 166, and 173 each coordinate ATP. The Proton acceptor role is filled by Asp-244. Mg(2+) is bound by residues Asn-245 and Asp-254. Residue Asp-254 participates in ATP binding.

Belongs to the SELO family. Mg(2+) serves as cofactor. It depends on Mn(2+) as a cofactor.

The enzyme catalyses L-seryl-[protein] + ATP = 3-O-(5'-adenylyl)-L-seryl-[protein] + diphosphate. It catalyses the reaction L-threonyl-[protein] + ATP = 3-O-(5'-adenylyl)-L-threonyl-[protein] + diphosphate. The catalysed reaction is L-tyrosyl-[protein] + ATP = O-(5'-adenylyl)-L-tyrosyl-[protein] + diphosphate. It carries out the reaction L-histidyl-[protein] + UTP = N(tele)-(5'-uridylyl)-L-histidyl-[protein] + diphosphate. The enzyme catalyses L-seryl-[protein] + UTP = O-(5'-uridylyl)-L-seryl-[protein] + diphosphate. It catalyses the reaction L-tyrosyl-[protein] + UTP = O-(5'-uridylyl)-L-tyrosyl-[protein] + diphosphate. Functionally, nucleotidyltransferase involved in the post-translational modification of proteins. It can catalyze the addition of adenosine monophosphate (AMP) or uridine monophosphate (UMP) to a protein, resulting in modifications known as AMPylation and UMPylation. In Shewanella loihica (strain ATCC BAA-1088 / PV-4), this protein is Protein nucleotidyltransferase YdiU.